The chain runs to 454 residues: UDP-N-acetylmuramate--L-alanine ligase (454 aa).

112–118 (GTHGKTT) is an ATP binding site.

Belongs to the MurCDEF family.

It localises to the cytoplasm. The enzyme catalyses UDP-N-acetyl-alpha-D-muramate + L-alanine + ATP = UDP-N-acetyl-alpha-D-muramoyl-L-alanine + ADP + phosphate + H(+). It functions in the pathway cell wall biogenesis; peptidoglycan biosynthesis. In terms of biological role, cell wall formation. This chain is UDP-N-acetylmuramate--L-alanine ligase, found in Nitratidesulfovibrio vulgaris (strain ATCC 29579 / DSM 644 / CCUG 34227 / NCIMB 8303 / VKM B-1760 / Hildenborough) (Desulfovibrio vulgaris).